The sequence spans 201 residues: Cerebellin-4 (201 aa).

An N-terminal signal peptide occupies residues 1–27 (MGSGRRALSAVPAVLLVLTLPGLPVWA). 2 N-linked (GlcNAc...) asparagine glycosylation sites follow: N29 and N88. Positions 66-201 (AANSKVAFSA…TFSGFLVFPL (136 aa)) constitute a C1q domain.

Homohexamer; disulfide-linked homotrimers. The trimers are assembled via the globular C1q domains. The trimers associate via N-terminal cysteine residues to form disulfide-linked hexamers. May form oligomers with CBLN1, CBLN2 and CBLN3 prior to secretion. Strongly interacts with DCC in a NTN1-displaceable fashion. Weakly binds to NRXN1 and NRXN2 long and short isoforms produced by alternative promoter usage. Interaction with NRXN3 short isoform is hardly detectable; no interaction at all with NRXN3 long isoform. Sialoglycoprotein.

It localises to the secreted. It is found in the synapse. In terms of biological role, acts as a synaptic organizer in specific subsets of neurons in the brain. Essential for the formation and maintenance of inhibitory GABAergic synapses. Promotes the development of dendrite-targeting inhibitory GABAergic synapses made by somatostatin-positive interneurons. May contribute to the function of ventral medial habenula region of the brain implicated in the regulation of anxiety-related behaviors. May play a role in CBLN3 export from the endoplasmic reticulum and secretion. This chain is Cerebellin-4 (CBLN4), found in Homo sapiens (Human).